A 433-amino-acid polypeptide reads, in one-letter code: Serine hydroxymethyltransferase (433 aa).

(6S)-5,6,7,8-tetrahydrofolate contacts are provided by residues L131 and G135–L137. Position 240 is an N6-(pyridoxal phosphate)lysine (K240).

It belongs to the SHMT family. Homodimer. Pyridoxal 5'-phosphate serves as cofactor.

It is found in the cytoplasm. The catalysed reaction is (6R)-5,10-methylene-5,6,7,8-tetrahydrofolate + glycine + H2O = (6S)-5,6,7,8-tetrahydrofolate + L-serine. It functions in the pathway one-carbon metabolism; tetrahydrofolate interconversion. Its pathway is amino-acid biosynthesis; glycine biosynthesis; glycine from L-serine: step 1/1. Catalyzes the reversible interconversion of serine and glycine with tetrahydrofolate (THF) serving as the one-carbon carrier. This reaction serves as the major source of one-carbon groups required for the biosynthesis of purines, thymidylate, methionine, and other important biomolecules. Also exhibits THF-independent aldolase activity toward beta-hydroxyamino acids, producing glycine and aldehydes, via a retro-aldol mechanism. The sequence is that of Serine hydroxymethyltransferase from Bifidobacterium adolescentis (strain ATCC 15703 / DSM 20083 / NCTC 11814 / E194a).